Reading from the N-terminus, the 198-residue chain is MPKVGMQPIRRQQLIDATLAAVNEVGMHDATIAQIARRAGVSNGIISHYFKDKNGLLEATMRYLISHLGEAVKLRLQALSDHSPASRLQAIVAGNFDDSQINSAAMKTWLAFWASSLHQPQLNRLQQVNGRRLYSNLCAEFSRVLPQAEARLAAKGLAALIDGLWLRSALRGAAFNQAQAIALTTDYITFQLRGHTPP.

The HTH tetR-type domain occupies 8-68 (PIRRQQLIDA…ATMRYLISHL (61 aa)). A DNA-binding region (H-T-H motif) is located at residues 31–50 (TIAQIARRAGVSNGIISHYF).

The protein operates within amine and polyamine biosynthesis; betaine biosynthesis via choline pathway [regulation]. Functionally, repressor involved in the biosynthesis of the osmoprotectant glycine betaine. It represses transcription of the choline transporter BetT and the genes of BetAB involved in the synthesis of glycine betaine. This Serratia proteamaculans (strain 568) protein is HTH-type transcriptional regulator BetI.